Consider the following 138-residue polypeptide: ATP synthase epsilon chain (138 aa).

It belongs to the ATPase epsilon chain family. F-type ATPases have 2 components, CF(1) - the catalytic core - and CF(0) - the membrane proton channel. CF(1) has five subunits: alpha(3), beta(3), gamma(1), delta(1), epsilon(1). CF(0) has three main subunits: a, b and c.

It localises to the cell membrane. In terms of biological role, produces ATP from ADP in the presence of a proton gradient across the membrane. The sequence is that of ATP synthase epsilon chain from Streptococcus equi subsp. equi (strain 4047).